The primary structure comprises 505 residues: Glutamyl-tRNA(Gln) amidotransferase subunit A (505 aa).

Residues K80 and S155 each act as charge relay system in the active site. S179 serves as the catalytic Acyl-ester intermediate.

Belongs to the amidase family. GatA subfamily. In terms of assembly, heterotrimer of A, B and C subunits.

It catalyses the reaction L-glutamyl-tRNA(Gln) + L-glutamine + ATP + H2O = L-glutaminyl-tRNA(Gln) + L-glutamate + ADP + phosphate + H(+). Its function is as follows. Allows the formation of correctly charged Gln-tRNA(Gln) through the transamidation of misacylated Glu-tRNA(Gln) in organisms which lack glutaminyl-tRNA synthetase. The reaction takes place in the presence of glutamine and ATP through an activated gamma-phospho-Glu-tRNA(Gln). This is Glutamyl-tRNA(Gln) amidotransferase subunit A from Acidothermus cellulolyticus (strain ATCC 43068 / DSM 8971 / 11B).